The primary structure comprises 403 residues: Acetyl-CoA acetyltransferase 2 (403 aa).

Residue Cys-97 is the Acyl-thioester intermediate of the active site. Residue Lys-237 coordinates CoA. Ala-254 lines the K(+) pocket. Ser-258 contacts CoA. Val-355 contributes to the K(+) binding site. Active-site proton acceptor residues include His-359 and Cys-389.

The protein belongs to the thiolase-like superfamily. Thiolase family. As to expression, expressed in root tips, emerging leaves, young leaves, stems, and anthers at the microspore stage.

The protein resides in the cytoplasm. It is found in the peroxisome. It catalyses the reaction 2 acetyl-CoA = acetoacetyl-CoA + CoA. It participates in metabolic intermediate biosynthesis; (R)-mevalonate biosynthesis; (R)-mevalonate from acetyl-CoA: step 1/3. Its function is as follows. Catalyzes the condensation of two molecules of acetyl-CoA to produce acetoacetyl-CoA. Generates the bulk of the acetoacetyl-CoA precursor required for the cytosol-localized, mevalonate-derived isoprenoid biosynthesis. The generated isoprenoids are required for normal growth and development. Essential protein during embryogenesis. This Arabidopsis thaliana (Mouse-ear cress) protein is Acetyl-CoA acetyltransferase 2.